Reading from the N-terminus, the 228-residue chain is L-ribulose-5-phosphate 4-epimerase UlaF (228 aa).

Residues 26–27 (GN), 43–44 (SG), and 72–73 (SS) each bind substrate. Aspartate 74, histidine 93, and histidine 95 together coordinate Zn(2+). Residue aspartate 118 is the Proton donor/acceptor of the active site. Histidine 167 serves as a coordination point for Zn(2+). The active-site Proton donor/acceptor is the tyrosine 225.

Belongs to the aldolase class II family. AraD/FucA subfamily. Zn(2+) serves as cofactor.

It carries out the reaction L-ribulose 5-phosphate = D-xylulose 5-phosphate. Its pathway is cofactor degradation; L-ascorbate degradation; D-xylulose 5-phosphate from L-ascorbate: step 4/4. In terms of biological role, catalyzes the isomerization of L-ribulose 5-phosphate to D-xylulose 5-phosphate. Is involved in the anaerobic L-ascorbate utilization. This is L-ribulose-5-phosphate 4-epimerase UlaF from Escherichia coli O45:K1 (strain S88 / ExPEC).